The sequence spans 366 residues: Ribosomal RNA large subunit methyltransferase M (366 aa).

S-adenosyl-L-methionine contacts are provided by residues Ser188, 221 to 224 (CPGG), Asp240, Asp260, and Asp277. The active-site Proton acceptor is Lys306.

Belongs to the class I-like SAM-binding methyltransferase superfamily. RNA methyltransferase RlmE family. RlmM subfamily. As to quaternary structure, monomer.

Its subcellular location is the cytoplasm. The catalysed reaction is cytidine(2498) in 23S rRNA + S-adenosyl-L-methionine = 2'-O-methylcytidine(2498) in 23S rRNA + S-adenosyl-L-homocysteine + H(+). In terms of biological role, catalyzes the 2'-O-methylation at nucleotide C2498 in 23S rRNA. This Salmonella newport (strain SL254) protein is Ribosomal RNA large subunit methyltransferase M.